Reading from the N-terminus, the 111-residue chain is Nitrogen regulatory protein P-II (111 aa).

Tyrosine 50 is modified (O-UMP-tyrosine).

Belongs to the P(II) protein family. Homotrimer.

In nitrogen-limiting conditions, when the ratio of Gln to 2-ketoglutarate decreases, P-II is uridylylated to P-II-UMP. P-II-UMP allows the deadenylation of glutamine synthetase (GS), thus activating the enzyme. Conversely, in nitrogen excess P-II is deuridylated and promotes the adenylation of GS. P-II indirectly controls the transcription of the GS gene (glnA). P-II prevents NR-II-catalyzed conversion of NR-I to NR-I-phosphate, the transcriptional activator of glnA. When P-II is uridylylated to P-II-UMP, these events are reversed. The chain is Nitrogen regulatory protein P-II (glnB) from Rhizobium leguminosarum bv. viciae.